A 137-amino-acid polypeptide reads, in one-letter code: Large ribosomal subunit protein mL41 (137 aa).

A mitochondrion-targeting transit peptide spans 1–13 (MGVLAAAARCLVR).

It belongs to the mitochondrion-specific ribosomal protein mL41 family. Component of the mitochondrial large ribosomal subunit (mt-LSU). Mature mammalian 55S mitochondrial ribosomes consist of a small (28S) and a large (39S) subunit. The 28S small subunit contains a 12S ribosomal RNA (12S mt-rRNA) and 30 different proteins. The 39S large subunit contains a 16S rRNA (16S mt-rRNA), a copy of mitochondrial valine transfer RNA (mt-tRNA(Val)), which plays an integral structural role, and 52 different proteins. Interacts with BCL2. Present in kidney, liver, thymus and testis, and at lower level in brain and spleen (at protein level).

The protein resides in the mitochondrion. Its function is as follows. Component of the mitochondrial ribosome large subunit. Also involved in apoptosis and cell cycle. Enhances p53/TP53 stability, thereby contributing to p53/TP53-induced apoptosis in response to growth-inhibitory condition. Enhances p53/TP53 translocation to the mitochondria. Has the ability to arrest the cell cycle at the G1 phase, possibly by stabilizing the CDKN1A and CDKN1B (p27Kip1) proteins. The polypeptide is Large ribosomal subunit protein mL41 (MRPL41) (Homo sapiens (Human)).